A 201-amino-acid polypeptide reads, in one-letter code: Peptide deformylase 2 (201 aa).

Fe cation-binding residues include C121 and H163. E164 is an active-site residue. H167 lines the Fe cation pocket.

Belongs to the polypeptide deformylase family. The cofactor is Fe(2+).

The catalysed reaction is N-terminal N-formyl-L-methionyl-[peptide] + H2O = N-terminal L-methionyl-[peptide] + formate. In terms of biological role, removes the formyl group from the N-terminal Met of newly synthesized proteins. Requires at least a dipeptide for an efficient rate of reaction. N-terminal L-methionine is a prerequisite for activity but the enzyme has broad specificity at other positions. This chain is Peptide deformylase 2, found in Prochlorococcus marinus (strain MIT 9313).